Consider the following 123-residue polypeptide: Ribosome-binding factor A (123 aa).

The protein belongs to the RbfA family. As to quaternary structure, monomer. Binds 30S ribosomal subunits, but not 50S ribosomal subunits or 70S ribosomes.

The protein resides in the cytoplasm. One of several proteins that assist in the late maturation steps of the functional core of the 30S ribosomal subunit. Associates with free 30S ribosomal subunits (but not with 30S subunits that are part of 70S ribosomes or polysomes). Required for efficient processing of 16S rRNA. May interact with the 5'-terminal helix region of 16S rRNA. This is Ribosome-binding factor A from Chlorobium chlorochromatii (strain CaD3).